The following is a 144-amino-acid chain: Interleukin-9 (144 aa).

Residues 1 to 18 (MLVTYILASVLLFSSVLG) form the signal peptide. Pyrrolidone carboxylic acid is present on Gln-19. Residues Asn-50, Asn-78, Asn-101, and Asn-114 are each glycosylated (N-linked (GlcNAc...) asparagine).

It belongs to the IL-7/IL-9 family. In terms of assembly, interacts with IL9R. Interacts with IL2RG.

Its subcellular location is the secreted. Multifunctional cytokine secreted mainly by T-helper 2 lymphocytes and also mast cells or NKT cells that plays important roles in the immune response against parasites. Affects intestinal epithelial permeability and adaptive immunity. In addition, induces the differentiation of specific T-cell subsets such as IL-17 producing helper T-cells (TH17) and also proliferation and differentiation of mast cells. Mechanistically, exerts its biological effects through a receptor composed of IL9R subunit and a signal transducing subunit IL2RG. Receptor stimulation results in the rapid activation of JAK1 and JAK3 kinase activities leading to STAT1, STAT3 and STAT5-mediated transcriptional programs. Induction of differentiation genes seems to be mediated by STAT1 alone, while protection of cells from apoptosis depends on STAT3 and STAT5. This is Interleukin-9 (Il9) from Mus musculus (Mouse).